A 43-amino-acid chain; its full sequence is Subtilosin-A (43 aa).

A propeptide spanning residues 1–8 (MKKAVIVE) is cleaved from the precursor. The segment at residues 9 to 43 (NKGCATCSIGAACLVDGPIPDFEIAGATGLFGLWG) is a cross-link (cyclopeptide (Asn-Gly)). The segment at residues 12–39 (CATCSIGAACLVDGPIPDFEIAGATGLF) is a cross-link (2-cysteinyl-D-phenylalanine (Cys-Phe)). Positions 15 to 36 (CSIGAACLVDGPIPDFEIAGAT) form a cross-link, 2-cysteinyl-D-allo-threonine (Cys-Thr). A cross-link (2-cysteinyl-L-phenylalanine (Cys-Phe)) is located at residues 21–30 (CLVDGPIPDF).

Belongs to the bacteriocin class V family. In terms of processing, this sactipeptide undergoes unique processing steps that include proteolytic cleavage after Glu-8, and covalent linkage of the alpha-amino of Asn-9 with the carboxyl of Gly-43 to form a cyclopeptide. Thioether cross-links are formed between cysteines and the alpha-carbons of other amino acids, Cys-12 to Phe-39, Cys-15 to Thr-36, and Cys-21 to Phe-30. In forming these cross-links, Thr-36 and Phe-39 are converted to D-amino acids. Propeptide cleavage and cyclopeptide formation only occur after all 3 thioether cross-links are formed.

It localises to the secreted. Functionally, has bacteriocidal activity against some Gram-positive bacteria such as Listeria, some species of Bacillus and E.faecium. A single mutation (Thr-14-Ile) confers hemolytic activity against rabbit and human blood. In Bacillus subtilis (strain 168), this protein is Subtilosin-A (sboA).